The chain runs to 375 residues: Lipid droplet hydrolase 1 (375 aa).

The AB hydrolase-1 domain maps to 88–358 (VFVFVPGLAG…CSHNLCFDRP (271 aa)). The active-site Charge relay system is the serine 177. Residues 373 to 375 (SKL) carry the Microbody targeting signal motif.

This sequence belongs to the AB hydrolase superfamily. Lipase family.

It is found in the lipid droplet. The catalysed reaction is a triacylglycerol + H2O = a diacylglycerol + a fatty acid + H(+). Functionally, serine hydrolase required for the maintenance of steady state level of non-polar and polar lipids of lipid droplets and thus plays a role in maintaining the lipids homeostasis. Exhibits both esterase and triacylglycerol lipase activity. The polypeptide is Lipid droplet hydrolase 1 (Saccharomyces cerevisiae (strain ATCC 204508 / S288c) (Baker's yeast)).